We begin with the raw amino-acid sequence, 255 residues long: Imidazole glycerol phosphate synthase subunit HisF (255 aa).

Catalysis depends on residues D11 and D130.

Belongs to the HisA/HisF family. In terms of assembly, heterodimer of HisH and HisF.

Its subcellular location is the cytoplasm. It catalyses the reaction 5-[(5-phospho-1-deoxy-D-ribulos-1-ylimino)methylamino]-1-(5-phospho-beta-D-ribosyl)imidazole-4-carboxamide + L-glutamine = D-erythro-1-(imidazol-4-yl)glycerol 3-phosphate + 5-amino-1-(5-phospho-beta-D-ribosyl)imidazole-4-carboxamide + L-glutamate + H(+). It participates in amino-acid biosynthesis; L-histidine biosynthesis; L-histidine from 5-phospho-alpha-D-ribose 1-diphosphate: step 5/9. Functionally, IGPS catalyzes the conversion of PRFAR and glutamine to IGP, AICAR and glutamate. The HisF subunit catalyzes the cyclization activity that produces IGP and AICAR from PRFAR using the ammonia provided by the HisH subunit. The chain is Imidazole glycerol phosphate synthase subunit HisF from Prochlorococcus marinus subsp. pastoris (strain CCMP1986 / NIES-2087 / MED4).